A 781-amino-acid polypeptide reads, in one-letter code: Dual specificity protein kinase zakA (781 aa).

Protein kinase domains follow at residues 9–317 (WEEI…HKLI) and 379–654 (DKDD…EIGL). ATP contacts are provided by residues 15–23 (IGEGQYGRV) and Lys-44. The active-site Proton acceptor is the Asp-132. The tract at residues 168–209 (ETTNNNNNPNNNNNNNNNNNNNNNNNNNNNNNNNNINNINNN) is disordered. Low complexity predominate over residues 171 to 209 (NNNNNPNNNNNNNNNNNNNNNNNNNNNNNNNNINNINNN). ATP is bound by residues 385-393 (GGAGNFGDV) and Lys-406. Residue Asp-507 is the Proton acceptor of the active site.

It in the N-terminal section; belongs to the protein kinase superfamily. Ser/Thr protein kinase family. The protein in the C-terminal section; belongs to the protein kinase superfamily. TKL Tyr protein kinase family. N-terminal serine/threonine domain is capable of autophosphorylation, in vitro, but to a lower extent than the tyrosine kinase domain. May function as a negative regulator of the tyrosine kinase domain. In terms of processing, C-terminal tyrosine kinase domain is capable of autophosphorylation, in vitro. In terms of tissue distribution, zakA and zak2 are coexpressed in prestalk cell population, zakA is enriched in pstB populations and zak1 in pstA populations. ZakA and zak2 are coexpressed in prespore cells, zakA expression levels are 10 fold higher than zak2.

It carries out the reaction L-seryl-[protein] + ATP = O-phospho-L-seryl-[protein] + ADP + H(+). The catalysed reaction is L-threonyl-[protein] + ATP = O-phospho-L-threonyl-[protein] + ADP + H(+). The enzyme catalyses L-tyrosyl-[protein] + ATP = O-phospho-L-tyrosyl-[protein] + ADP + H(+). Its function is as follows. Positive regulator of gsk3/gskA activity required for cell pattern formation and a downstream effector of carC. The kinases, gsk3/gskA, zakA and zak2, form part of a signaling pathway that responds to extracellular cyclic AMP. The pathway has a role in transcriptional regulation; required to direct prespore/spore fates during development. ZakA negatively regulates prestalk differentiation by regulating expression of ecmB. Phosphorylates Y-214 of gsk3/gskA, in vitro. The polypeptide is Dual specificity protein kinase zakA (zakA) (Dictyostelium discoideum (Social amoeba)).